Here is a 205-residue protein sequence, read N- to C-terminus: Outer-membrane lipoprotein LolB (205 aa).

An N-terminal signal peptide occupies residues 1–17 (MFLRHFIVFSFIALLAG). The N-palmitoyl cysteine moiety is linked to residue Cys18. Cys18 is lipidated: S-diacylglycerol cysteine.

This sequence belongs to the LolB family. In terms of assembly, monomer.

It is found in the cell outer membrane. In terms of biological role, plays a critical role in the incorporation of lipoproteins in the outer membrane after they are released by the LolA protein. The protein is Outer-membrane lipoprotein LolB of Pseudomonas fluorescens (strain ATCC BAA-477 / NRRL B-23932 / Pf-5).